The primary structure comprises 364 residues: DNA replication and repair protein RecF (364 aa).

Position 30–37 (30–37 (GNNAQGKT)) interacts with ATP.

This sequence belongs to the RecF family.

Its subcellular location is the cytoplasm. Its function is as follows. The RecF protein is involved in DNA metabolism; it is required for DNA replication and normal SOS inducibility. RecF binds preferentially to single-stranded, linear DNA. It also seems to bind ATP. The chain is DNA replication and repair protein RecF from Clostridium botulinum (strain Langeland / NCTC 10281 / Type F).